Here is an 83-residue protein sequence, read N- to C-terminus: MKVTLIAILTCAAVLVLHTTAAEELEESQLMEVGMPDTELAAVDEERLFECSISCEIEKKGESCKPKKCKGGWKCKFNMCVKV.

The signal sequence occupies residues 1 to 21 (MKVTLIAILTCAAVLVLHTTA). Residues 22 to 48 (AEELEESQLMEVGMPDTELAAVDEERL) constitute a propeptide that is removed on maturation. Cystine bridges form between Cys-51–Cys-64, Cys-55–Cys-75, and Cys-69–Cys-80.

Belongs to the neurotoxin 12 (Hwtx-2) family. 02 (Hwtx-2) subfamily. As to expression, expressed by the venom gland.

It localises to the secreted. Functionally, lethal neurotoxin that blocks neuromuscular transmission. The chain is U1-theraphotoxin-Hs1f from Cyriopagopus schmidti (Chinese bird spider).